The following is a 262-amino-acid chain: Phosphatidylglycerol--prolipoprotein diacylglyceryl transferase (262 aa).

The next 4 helical transmembrane spans lie at 9 to 29 (LGPLAIRWYALCIVTGLILAV), 41 to 61 (IIPDDILDFILVAFPLAILGA), 80 to 100 (IFAIWNGGLAIYGGLITGALV), and 109 to 129 (LINTWDFLDIAAPSVMIAQSL). An a 1,2-diacyl-sn-glycero-3-phospho-(1'-sn-glycerol)-binding site is contributed by arginine 131. 3 consecutive transmembrane segments (helical) span residues 167-187 (QPTFLYESLWNLLGFALILIF), 197-217 (GHITAFYLIWYGFGRMVIEGM), and 226-246 (GLRVSQWLSVVFIGLGIMIVI).

This sequence belongs to the Lgt family.

It localises to the cell membrane. It carries out the reaction L-cysteinyl-[prolipoprotein] + a 1,2-diacyl-sn-glycero-3-phospho-(1'-sn-glycerol) = an S-1,2-diacyl-sn-glyceryl-L-cysteinyl-[prolipoprotein] + sn-glycerol 1-phosphate + H(+). It functions in the pathway protein modification; lipoprotein biosynthesis (diacylglyceryl transfer). In terms of biological role, catalyzes the transfer of the diacylglyceryl group from phosphatidylglycerol to the sulfhydryl group of the N-terminal cysteine of a prolipoprotein, the first step in the formation of mature lipoproteins. This chain is Phosphatidylglycerol--prolipoprotein diacylglyceryl transferase, found in Streptococcus pneumoniae (strain Taiwan19F-14).